A 157-amino-acid polypeptide reads, in one-letter code: MKQSIFEVLIYLFENYLANDDEPSPDRDSLESELFEAGFTPLEIRKAFDWLDGLADSRNMPATVTGDRAIRVYHERETVRLDVESRGFILFLEQAGILDRAGRELVIDRLMALEDDDVDLDTVKWVVLMVLFNQPGQEEAFNWMEDLLFDNPVHLVH.

Belongs to the Smg family.

This is Protein Smg homolog from Alkalilimnicola ehrlichii (strain ATCC BAA-1101 / DSM 17681 / MLHE-1).